Reading from the N-terminus, the 889-residue chain is MAELPQSRINERNITSEMRESFLDYAMSVIVARALPDVRDGLKPVHRRILYGLNEQGMTPDKSYKKSARIVGDVMGKYHPHGDSSIYEAMVRMAQDFSYRYPLVDGQGNFGSMDGDGAAAMRYTEARMTKITLELLRDINKDTIDFIDNYDGNEREPSVLPARFPNLLANGASGIAVGMATNIPPHNLTELINGVLSLSKNPDISIAELMEDIEGPDFPTAGLILGKSGIRRAYETGRGSIQMRSRAVIEERGGGRQRIVVTEIPFQVNKARMIEKIAELVRDKKIDGITDLRDETSLRTGVRVVIDVRKDANASVILNNLYKQTPLQTSFGVNMIALVNGRPKLINLKEALVHYLEHQKTVVRRRTQYNLRKAKDRAHILEGLRIALDHIDEIISTIRESDTDKVAMESLQQRFKLSEKQAQAILDMRLRRLTGLERDKIEAEYNELLNYISELEAILADEEVLLQLVRDELTEIRDRFGDDRRTEIQLGGFEDLEDEDLIPEEQIVITLSHNNYIKRLPVSTYRAQNRGGRGVQGMNTLEEDFVSQLVTLSTHDHVLFFTNKGRVYKLKGYEVPELSRQSKGIPVVNAIELENDEVISTMIAVKDLESEDNFLVFATKRGVVKRSALSNFSRINRNGKIAISFREDDELIAVRLTSGQEDILIGTSHASLIRFPESTLRPLGRTATGVKGITLREGDEVVGLDVAHANSVDEVLVVTENGYGKRTPVNDYRLSNRGGKGIKTATITERNGNVVCITTVTGEEDLMIVTNAGVIIRLDVADISQNGRAAQGVRLIRLGDDQFVSTVAKVKEDAEDETNEDEQSTSTVSEDGTEQQREAVVNDETPGNAIHTEVIDSEENDEDGRIEVRQDFMDRVEEDIQQSLDEDEE.

Residues 35–501 (LPDVRDGLKP…GFEDLEDEDL (467 aa)) form the Topo IIA-type catalytic domain. The active-site O-(5'-phospho-DNA)-tyrosine intermediate is Y123. Positions 528–534 (QNRGGRG) match the GyrA-box motif. A disordered region spans residues 811 to 889 (KEDAEDETNE…IQQSLDEDEE (79 aa)). Acidic residues predominate over residues 813–823 (DAEDETNEDEQ). A compositionally biased stretch (basic and acidic residues) spans 863–875 (DGRIEVRQDFMDR). A compositionally biased stretch (acidic residues) spans 876-889 (VEEDIQQSLDEDEE).

This sequence belongs to the type II topoisomerase GyrA/ParC subunit family. In terms of assembly, heterotetramer, composed of two GyrA and two GyrB chains. In the heterotetramer, GyrA contains the active site tyrosine that forms a transient covalent intermediate with DNA, while GyrB binds cofactors and catalyzes ATP hydrolysis.

The protein localises to the cytoplasm. The catalysed reaction is ATP-dependent breakage, passage and rejoining of double-stranded DNA.. Its function is as follows. A type II topoisomerase that negatively supercoils closed circular double-stranded (ds) DNA in an ATP-dependent manner to modulate DNA topology and maintain chromosomes in an underwound state. Negative supercoiling favors strand separation, and DNA replication, transcription, recombination and repair, all of which involve strand separation. Also able to catalyze the interconversion of other topological isomers of dsDNA rings, including catenanes and knotted rings. Type II topoisomerases break and join 2 DNA strands simultaneously in an ATP-dependent manner. This chain is DNA gyrase subunit A, found in Staphylococcus aureus.